The following is a 72-amino-acid chain: ATP synthase subunit c (72 aa).

Helical transmembrane passes span 5–25 and 51–71; these read LLAAGIAVLAGIGAGIGIGIA and AGLSEATAIYGLVVSIILLFV.

It belongs to the ATPase C chain family. In terms of assembly, F-type ATPases have 2 components, F(1) - the catalytic core - and F(0) - the membrane proton channel. F(1) has five subunits: alpha(3), beta(3), gamma(1), delta(1), epsilon(1). F(0) has three main subunits: a(1), b(2) and c(10-14). The alpha and beta chains form an alternating ring which encloses part of the gamma chain. F(1) is attached to F(0) by a central stalk formed by the gamma and epsilon chains, while a peripheral stalk is formed by the delta and b chains.

Its subcellular location is the cell membrane. In terms of biological role, f(1)F(0) ATP synthase produces ATP from ADP in the presence of a proton or sodium gradient. F-type ATPases consist of two structural domains, F(1) containing the extramembraneous catalytic core and F(0) containing the membrane proton channel, linked together by a central stalk and a peripheral stalk. During catalysis, ATP synthesis in the catalytic domain of F(1) is coupled via a rotary mechanism of the central stalk subunits to proton translocation. Its function is as follows. Key component of the F(0) channel; it plays a direct role in translocation across the membrane. A homomeric c-ring of between 10-14 subunits forms the central stalk rotor element with the F(1) delta and epsilon subunits. The protein is ATP synthase subunit c of Clostridium perfringens (strain ATCC 13124 / DSM 756 / JCM 1290 / NCIMB 6125 / NCTC 8237 / Type A).